Consider the following 88-residue polypeptide: Cell division topological specificity factor (88 aa).

This sequence belongs to the MinE family.

Its function is as follows. Prevents the cell division inhibition by proteins MinC and MinD at internal division sites while permitting inhibition at polar sites. This ensures cell division at the proper site by restricting the formation of a division septum at the midpoint of the long axis of the cell. In Clostridium botulinum (strain Alaska E43 / Type E3), this protein is Cell division topological specificity factor.